The primary structure comprises 458 residues: Argininosuccinate lyase (458 aa).

Belongs to the lyase 1 family. Argininosuccinate lyase subfamily.

It localises to the cytoplasm. It carries out the reaction 2-(N(omega)-L-arginino)succinate = fumarate + L-arginine. The protein operates within amino-acid biosynthesis; L-arginine biosynthesis; L-arginine from L-ornithine and carbamoyl phosphate: step 3/3. This is Argininosuccinate lyase from Lachnospira eligens (strain ATCC 27750 / DSM 3376 / VPI C15-48 / C15-B4) (Eubacterium eligens).